The primary structure comprises 273 residues: Dermonecrotic toxin LdSicTox-alphaIB1avi (273 aa).

Residue histidine 5 is part of the active site. Residues glutamate 25 and aspartate 27 each contribute to the Mg(2+) site. The Nucleophile role is filled by histidine 41. 2 disulfide bridges follow: cysteine 45-cysteine 51 and cysteine 47-cysteine 190. Aspartate 85 is a binding site for Mg(2+). Residue asparagine 250 is glycosylated (N-linked (GlcNAc...) asparagine).

It belongs to the arthropod phospholipase D family. Class II subfamily. Requires Mg(2+) as cofactor. Expressed by the venom gland.

It is found in the secreted. The catalysed reaction is an N-(acyl)-sphingosylphosphocholine = an N-(acyl)-sphingosyl-1,3-cyclic phosphate + choline. The enzyme catalyses an N-(acyl)-sphingosylphosphoethanolamine = an N-(acyl)-sphingosyl-1,3-cyclic phosphate + ethanolamine. It carries out the reaction a 1-acyl-sn-glycero-3-phosphocholine = a 1-acyl-sn-glycero-2,3-cyclic phosphate + choline. It catalyses the reaction a 1-acyl-sn-glycero-3-phosphoethanolamine = a 1-acyl-sn-glycero-2,3-cyclic phosphate + ethanolamine. Dermonecrotic toxins cleave the phosphodiester linkage between the phosphate and headgroup of certain phospholipids (sphingolipid and lysolipid substrates), forming an alcohol (often choline) and a cyclic phosphate. This toxin acts on sphingomyelin (SM). It may also act on ceramide phosphoethanolamine (CPE), lysophosphatidylcholine (LPC) and lysophosphatidylethanolamine (LPE), but not on lysophosphatidylserine (LPS), and lysophosphatidylglycerol (LPG). It acts by transphosphatidylation, releasing exclusively cyclic phosphate products as second products. Induces dermonecrosis, hemolysis, increased vascular permeability, edema, inflammatory response, and platelet aggregation. The protein is Dermonecrotic toxin LdSicTox-alphaIB1avi of Loxosceles deserta (Desert recluse spider).